Consider the following 930-residue polypeptide: Polypeptide N-acetylgalactosaminyltransferase 5 (930 aa).

Residues M1–G12 are Cytoplasmic-facing. A helical; Signal-anchor for type II membrane protein transmembrane segment spans residues R13–L35. Over S36–V930 the chain is Lumenal. The segment at K190 to E209 is disordered. Over residues A193 to E209 the composition is skewed to polar residues. N-linked (GlcNAc...) asparagine glycosylation is found at N198, N213, and N283. S285 carries the phosphoserine modification. Residues N287, N309, N355, and N387 are each glycosylated (N-linked (GlcNAc...) asparagine). The segment at D327–L381 is disordered. Polar residues predominate over residues P353–P363. 3 disulfide bridges follow: C476–C708, C699–C779, and C812–C825. Residues L485–R594 form a catalytic subdomain A region. Substrate is bound by residues D526 and R555. N-linked (GlcNAc...) asparagine glycosylation occurs at N568. D578 serves as a coordination point for Mn(2+). S579 contacts substrate. Residue H580 participates in Mn(2+) binding. The tract at residues I654–R716 is catalytic subdomain B. Residue W685 participates in substrate binding. H713 contributes to the Mn(2+) binding site. Positions 716 and 721 each coordinate substrate. N-linked (GlcNAc...) asparagine glycosylation is found at N766, N817, and N835. Positions K794–E925 constitute a Ricin B-type lectin domain. 2 disulfides stabilise this stretch: C848–C863 and C898–C913. N902 carries an N-linked (GlcNAc...) asparagine glycan.

The protein belongs to the glycosyltransferase 2 family. GalNAc-T subfamily. As to quaternary structure, interacts with EXT2. Does not interact with EXT1, EXTL1 or EXTL3. Requires Mn(2+) as cofactor. As to expression, expressed at low level. Not expressed before E7.5 during embryogenesis. Expressed in dental mesenchyme and tongue. Accumulates in a subset of mesenchymal cells at the ventral-most portions of the 12.5 dpc maxilla and mandible underlying the dental lamina.

The protein resides in the golgi apparatus membrane. The enzyme catalyses L-seryl-[protein] + UDP-N-acetyl-alpha-D-galactosamine = a 3-O-[N-acetyl-alpha-D-galactosaminyl]-L-seryl-[protein] + UDP + H(+). The catalysed reaction is L-threonyl-[protein] + UDP-N-acetyl-alpha-D-galactosamine = a 3-O-[N-acetyl-alpha-D-galactosaminyl]-L-threonyl-[protein] + UDP + H(+). The protein operates within protein modification; protein glycosylation. Catalyzes the initial reaction in O-linked oligosaccharide biosynthesis, the transfer of an N-acetyl-D-galactosamine residue to a serine or threonine residue on the protein receptor. Has activity toward EA2 peptide substrate, but has a weak activity toward Muc2 or Muc1b substrates. The protein is Polypeptide N-acetylgalactosaminyltransferase 5 (Galnt5) of Mus musculus (Mouse).